The chain runs to 255 residues: Acetylglutamate kinase (255 aa).

Substrate is bound by residues 40-41 (GG), Arg62, and Asn153.

The protein belongs to the acetylglutamate kinase family. ArgB subfamily.

It is found in the cytoplasm. It carries out the reaction N-acetyl-L-glutamate + ATP = N-acetyl-L-glutamyl 5-phosphate + ADP. The protein operates within amino-acid biosynthesis; L-arginine biosynthesis; N(2)-acetyl-L-ornithine from L-glutamate: step 2/4. Its function is as follows. Catalyzes the ATP-dependent phosphorylation of N-acetyl-L-glutamate. The chain is Acetylglutamate kinase from Bacillus thuringiensis subsp. konkukian (strain 97-27).